Here is a 346-residue protein sequence, read N- to C-terminus: D-fructose 1,6-bisphosphatase class 2/sedoheptulose 1,7-bisphosphatase 1 (346 aa).

Residues aspartate 33, glutamate 57, aspartate 97, and glutamate 100 each coordinate Mn(2+). Residues 100–102 (EGT), tyrosine 131, 176–178 (RAR), and 198–200 (DGD) contribute to the substrate site. Glutamate 225 provides a ligand contact to Mn(2+).

This sequence belongs to the FBPase class 2 family. Homotetramer. Mn(2+) is required as a cofactor.

It catalyses the reaction beta-D-fructose 1,6-bisphosphate + H2O = beta-D-fructose 6-phosphate + phosphate. The catalysed reaction is D-sedoheptulose 1,7-bisphosphate + H2O = D-sedoheptulose 7-phosphate + phosphate. It participates in carbohydrate biosynthesis; Calvin cycle. Functionally, catalyzes the hydrolysis of fructose 1,6-bisphosphate (Fru 1,6-P2) and sedoheptulose 1,7-bisphosphate (Sed 1,7-P2) to fructose 6-phosphate and sedoheptulose 7-phosphate, respectively. This chain is D-fructose 1,6-bisphosphatase class 2/sedoheptulose 1,7-bisphosphatase 1, found in Acaryochloris marina (strain MBIC 11017).